The chain runs to 514 residues: Maturase K (514 aa).

This sequence belongs to the intron maturase 2 family. MatK subfamily.

It is found in the plastid. The protein localises to the chloroplast. Usually encoded in the trnK tRNA gene intron. Probably assists in splicing its own and other chloroplast group II introns. This is Maturase K from Zamia integrifolia (Coontie).